A 98-amino-acid chain; its full sequence is Aspartyl/glutamyl-tRNA(Asn/Gln) amidotransferase subunit C (98 aa).

Positions 75-98 are disordered; sequence AQALSGAPAQEQQRFKVPQILGED.

It belongs to the GatC family. As to quaternary structure, heterotrimer of A, B and C subunits.

The catalysed reaction is L-glutamyl-tRNA(Gln) + L-glutamine + ATP + H2O = L-glutaminyl-tRNA(Gln) + L-glutamate + ADP + phosphate + H(+). The enzyme catalyses L-aspartyl-tRNA(Asn) + L-glutamine + ATP + H2O = L-asparaginyl-tRNA(Asn) + L-glutamate + ADP + phosphate + 2 H(+). Functionally, allows the formation of correctly charged Asn-tRNA(Asn) or Gln-tRNA(Gln) through the transamidation of misacylated Asp-tRNA(Asn) or Glu-tRNA(Gln) in organisms which lack either or both of asparaginyl-tRNA or glutaminyl-tRNA synthetases. The reaction takes place in the presence of glutamine and ATP through an activated phospho-Asp-tRNA(Asn) or phospho-Glu-tRNA(Gln). This Streptomyces griseus subsp. griseus (strain JCM 4626 / CBS 651.72 / NBRC 13350 / KCC S-0626 / ISP 5235) protein is Aspartyl/glutamyl-tRNA(Asn/Gln) amidotransferase subunit C.